The primary structure comprises 2998 residues: Probable polyketide synthase 14 (2998 aa).

Residues 19–456 (EDDIAIIGIG…GSNCCLILSE (438 aa)) form the Ketosynthase family 3 (KS3) domain. Residues C189, H331, and H376 each act as for beta-ketoacyl synthase activity in the active site. Residues 657–690 (GIEASFIVGHSLGEIPAAYCSGMITLDTLCYLIY) form an acyl/malonyl transferase region. S667 functions as the For acyl/malonyl transferase activity in the catalytic mechanism. Residues 962–1084 (IDQLGFSLIE…GNFQLFTSGN (123 aa)) are N-terminal hotdog fold. The 288-residue stretch at 962-1249 (IDQLGFSLIE…CKSLTIIKDS (288 aa)) folds into the PKS/mFAS DH domain. Residue H996 is the Proton acceptor; for dehydratase activity of the active site. The segment at 1101 to 1249 (NLTKLTKNEL…CKSLTIIKDS (149 aa)) is C-terminal hotdog fold. Catalysis depends on D1159, which acts as the Proton donor; for dehydratase activity. A helical transmembrane segment spans residues 1979–1999 (SILIHSGSGGIGLSALNILKW). The region spanning 2476 to 2553 (ENDTSIDSLF…SSIKLITNQL (78 aa)) is the Carrier domain. S2513 carries the O-(pantetheine 4'-phosphoryl)serine modification. The disordered stretch occupies residues 2559–2578 (DGQQQQHRQNKKNNNIPENK). Over residues 2561–2573 (QQQQHRQNKKNNN) the composition is skewed to low complexity. Residues 2621-2641 (IFLTGSTGFLGAYLLWYLIQM) form a helical membrane-spanning segment.

It depends on pantetheine 4'-phosphate as a cofactor.

Its subcellular location is the membrane. Probable polyketide synthase. This Dictyostelium discoideum (Social amoeba) protein is Probable polyketide synthase 14 (pks14).